The following is a 142-amino-acid chain: Immunoglobulin omega chain (142 aa).

The signal sequence occupies residues 1 to 19 (MAWTSVLLMLLAHLTGCGP). The framework-1 stretch occupies residues 20 to 41 (QPMVHQPPSASSSLGATIRLSC). Cys-41 and Cys-115 form a disulfide bridge. The complementarity-determining-1 stretch occupies residues 42–56 (TLSNDHNIGIYSIYW). Positions 57 to 70 (YQQRPGHPPRFLLR) are framework-2. Residues 71–81 (YFSHSDKHQGP) form a complementarity-determining-2 region. The segment at 82–115 (DIPPRFSGSKDTARNLGYLSISELQPEDEAVYYC) is framework-3.

The protein belongs to the immunoglobulin superfamily. Only expressed by pre-B-cells.

In terms of biological role, associates with the Ig-mu chain to form a molecular complex that is expressed on the surface of pre-B-cells. This complex presumably regulates Ig gene rearrangements in the early steps of B-cell differentiation. This chain is Immunoglobulin omega chain, found in Mus musculus (Mouse).